A 394-amino-acid polypeptide reads, in one-letter code: Ornithine aminotransferase 1 (394 aa).

Residue K252 is modified to N6-(pyridoxal phosphate)lysine.

The protein belongs to the class-III pyridoxal-phosphate-dependent aminotransferase family. OAT subfamily. The cofactor is pyridoxal 5'-phosphate.

The protein localises to the cytoplasm. It carries out the reaction a 2-oxocarboxylate + L-ornithine = L-glutamate 5-semialdehyde + an L-alpha-amino acid. It participates in amino-acid biosynthesis; L-proline biosynthesis; L-glutamate 5-semialdehyde from L-ornithine: step 1/1. In terms of biological role, catalyzes the interconversion of ornithine to glutamate semialdehyde. The sequence is that of Ornithine aminotransferase 1 from Staphylococcus aureus (strain Mu50 / ATCC 700699).